Reading from the N-terminus, the 715-residue chain is Serine/arginine repetitive matrix protein 5 (715 aa).

Over residues 1 to 13 (MSSPKRSSKPSMS) the composition is skewed to low complexity. Residues 1–715 (MSSPKRSSKP…RSSSSSSKLA (715 aa)) form a disordered region. The span at 32 to 59 (LKSTKSATPNRSLVPTKPATSRNSVMSP) shows a compositional bias: polar residues. The segment covering 60-79 (SSSKSTKSTSTKRAPSNRPS) has biased composition (low complexity). Positions 80-90 (SRSRVRSKART) are enriched in basic residues. Residues 92–104 (SRVSTDTRTSKAS) show a composition bias toward polar residues. The span at 112 to 136 (HQRRGTHSRGRTPGRRGSRSSKRSP) shows a compositional bias: basic residues. Composition is skewed to polar residues over residues 213-224 (TPSTAKCQTPTG) and 257-272 (YSPTEMSSRVKSYNQA). Positions 273 to 285 (STRSRPQSHSQSR) are enriched in low complexity. Positions 286 to 320 (SPRRSRSGSQKRTHSRVRSHSWKRNHSRARSRTRK) are enriched in basic residues. 2 stretches are compositionally biased toward basic and acidic residues: residues 359–388 (PSKERSHSHSRSSSKERDHRGSSSPRKESG) and 397–521 (KQRD…ERDH). A compositionally biased stretch (basic residues) spans 522-536 (RRSRSPSKERQRRQS). 2 stretches are compositionally biased toward basic and acidic residues: residues 539–595 (PNKE…DHSR) and 611–628 (SSKEKAHSRSRTPSKEGN). Residues 657–666 (TRTSSLSQNR) show a composition bias toward polar residues. Over residues 667-681 (TPSKTSSHSPSTFPS) the composition is skewed to low complexity. Positions 682–715 (GGQTLSQDDSQADATTSKATLPGERSSSSSSKLA) are enriched in polar residues.

The protein is Serine/arginine repetitive matrix protein 5 (SRRM5) of Homo sapiens (Human).